Here is a 571-residue protein sequence, read N- to C-terminus: ATP-dependent RNA helicase RhlB (571 aa).

Residues 9–37 carry the Q motif motif; the sequence is VTFSSFDLHPALIAGLESAGFTRCTPIQA. Residues 40–220 enclose the Helicase ATP-binding domain; sequence LPVALPGGDV…YEHMNEPEKL (181 aa). Residue 53–60 coordinates ATP; sequence AQTGTGKT. The short motif at 166 to 169 is the DEAD box element; it reads DEAD. Residues 231–393 form the Helicase C-terminal domain; it reads RVRQRIYFPS…PVTSELLTPL (163 aa). Positions 391–558 are disordered; it reads TPLPRAPRVP…KPSGSPSLLS (168 aa). Over residues 402–411 the composition is skewed to acidic residues; it reads EGEEADDDAG. A compositionally biased stretch (basic and acidic residues) spans 419-432; that stretch reads REAREQRAAEEQRR. Positions 435-448 are enriched in gly residues; it reads GRGGPGGSRSGSGG. Over residues 449–460 the composition is skewed to basic and acidic residues; the sequence is GRRDGAGADGKP. Residues 483-497 show a composition bias toward low complexity; that stretch reads VVAAVAAQAPSAGVA. The segment covering 503–512 has biased composition (basic residues); sequence PRKRRRRRNG. Residues 539 to 558 show a composition bias toward low complexity; the sequence is VVAKPVRAAAKPSGSPSLLS.

It belongs to the DEAD box helicase family. RhlB subfamily. In terms of assembly, component of the RNA degradosome, which is a multiprotein complex involved in RNA processing and mRNA degradation.

Its subcellular location is the cytoplasm. The catalysed reaction is ATP + H2O = ADP + phosphate + H(+). In terms of biological role, DEAD-box RNA helicase involved in RNA degradation. Has RNA-dependent ATPase activity and unwinds double-stranded RNA. In Xanthomonas axonopodis pv. citri (strain 306), this protein is ATP-dependent RNA helicase RhlB.